We begin with the raw amino-acid sequence, 860 residues long: MRFKLHDVHIRRGLCCVADSYISPASINSGIRALIQKGEYLQALHLYSKHDGSSPFWTSVFTFPSLLKACSALTNLSYGKTIHGSVVVLGWRYDPFIATSLVNMYVKCGFLDYAVQVFDGWSQSQSGVSARDVTVWNSMIDGYFKFRRFKEGVGCFRRMLVFGVRPDAFSLSIVVSVMCKEGNFRREEGKQIHGFMLRNSLDTDSFLKTALIDMYFKFGLSIDAWRVFVEIEDKSNVVLWNVMIVGFGGSGICESSLDLYMLAKNNSVKLVSTSFTGALGACSQSENSGFGRQIHCDVVKMGLHNDPYVCTSLLSMYSKCGMVGEAETVFSCVVDKRLEIWNAMVAAYAENDYGYSALDLFGFMRQKSVLPDSFTLSNVISCCSVLGLYNYGKSVHAELFKRPIQSTSTIESALLTLYSKCGCDPDAYLVFKSMEEKDMVAWGSLISGLCKNGKFKEALKVFGDMKDDDDSLKPDSDIMTSVTNACAGLEALRFGLQVHGSMIKTGLVLNVFVGSSLIDLYSKCGLPEMALKVFTSMSTENMVAWNSMISCYSRNNLPELSIDLFNLMLSQGIFPDSVSITSVLVAISSTASLLKGKSLHGYTLRLGIPSDTHLKNALIDMYVKCGFSKYAENIFKKMQHKSLITWNLMIYGYGSHGDCITALSLFDEMKKAGESPDDVTFLSLISACNHSGFVEEGKNIFEFMKQDYGIEPNMEHYANMVDLLGRAGLLEEAYSFIKAMPIEADSSIWLCLLSASRTHHNVELGILSAEKLLRMEPERGSTYVQLINLYMEAGLKNEAAKLLGLMKEKGLHKQPGCSWIEVSDRTNVFFSGGSSSPMKAEIFNVLNRLKSNMVDEDKAT.

PPR repeat units follow at residues 59-93, 94-124, 132-166, 167-203, 204-234, 236-270, 271-305, 306-340, 341-371, 372-406, 407-437, 438-472, 475-509, 510-540, 541-575, 576-610, 611-641, 642-676, 677-707, and 713-743; these read SVFT…GWRY, DPFI…WSQS, DVTV…GVRP, DAFS…SLDT, DSFL…IEDK, NVVL…SVKL, VSTS…GLHN, DPYV…RLEI, WNAM…SVLP, DSFT…PIQS, TSTI…MEEK, DMVA…DDSL, DSDI…GLVL, NVFV…MSTE, NMVA…GIFP, DSVS…GIPS, DTHL…MQHK, SLIT…GESP, DDVT…MKQD, and NMEH…MPIE. The type E motif stretch occupies residues 748-823; sequence IWLCLLSASR…QPGCSWIEVS (76 aa). The tract at residues 824 to 854 is type E(+) motif; it reads DRTNVFFSGGSSSPMKAEIFNVLNRLKSNMV.

The protein belongs to the PPR family. PCMP-E subfamily.

This chain is Pentatricopeptide repeat-containing protein At2g40720 (PCMP-E26), found in Arabidopsis thaliana (Mouse-ear cress).